The sequence spans 476 residues: Serine carboxypeptidase 2 (476 aa).

The signal sequence occupies residues 1–34; the sequence is MRTTTRRLPPAPAAAAVLLAALTCLLLRPAAVAA. 3 cysteine pairs are disulfide-bonded: Cys-97/Cys-353, Cys-254/Cys-266, and Cys-290/Cys-320. N-linked (GlcNAc...) asparagine glycans are attached at residues Asn-148 and Asn-159. The active site involves Ser-190. Asn-291 carries an N-linked (GlcNAc...) asparagine glycan. A propeptide spans 295 to 313 (linker peptide); sequence SSSSSSLSRRRTRGRYPWL. At Thr-314 the chain carries Blocked amino end (Thr). Residues Asn-341 and Asn-347 are each glycosylated (N-linked (GlcNAc...) asparagine). Asn-352 is a glycosylation site (N-linked (GlcNAc...) asparagine; partial). Asn-352 carries an O-linked (GalNAc...) threonine; in variant 351-AT-352 glycan. Active-site residues include Asp-390 and His-443. N-linked (GlcNAc...) asparagine glycosylation occurs at Asn-472.

It belongs to the peptidase S10 family. Carboxypeptidase II is a dimer, where each monomer is composed of two chains linked by a disulfide bond.

Its subcellular location is the secreted. The catalysed reaction is Preferential release of a C-terminal arginine or lysine residue.. Functionally, may be involved in the degradation of small peptides (2-5 residues) or in the degradation of storage proteins in the embryo. In Hordeum vulgare (Barley), this protein is Serine carboxypeptidase 2 (CBP2).